Consider the following 527-residue polypeptide: tRNA-2-methylthio-N(6)-dimethylallyladenosine synthase (527 aa).

The interval 1–27 (MMNEKQRLQYTAQIETDHPTDKKSALD) is disordered. Basic and acidic residues predominate over residues 15–27 (ETDHPTDKKSALD). An MTTase N-terminal domain is found at 84 to 202 (RKFYIRTYGC…LPYILKEAYM (119 aa)). [4Fe-4S] cluster-binding residues include C93, C129, C163, C239, C243, and C246. The Radical SAM core domain occupies 225–455 (RKGNIKAWVN…NALVNEISAK (231 aa)). One can recognise a TRAM domain in the interval 458–521 (KEYEGQVVEV…TWTLNGEMVE (64 aa)).

The protein belongs to the methylthiotransferase family. MiaB subfamily. As to quaternary structure, monomer. The cofactor is [4Fe-4S] cluster.

The protein resides in the cytoplasm. It carries out the reaction N(6)-dimethylallyladenosine(37) in tRNA + (sulfur carrier)-SH + AH2 + 2 S-adenosyl-L-methionine = 2-methylsulfanyl-N(6)-dimethylallyladenosine(37) in tRNA + (sulfur carrier)-H + 5'-deoxyadenosine + L-methionine + A + S-adenosyl-L-homocysteine + 2 H(+). Catalyzes the methylthiolation of N6-(dimethylallyl)adenosine (i(6)A), leading to the formation of 2-methylthio-N6-(dimethylallyl)adenosine (ms(2)i(6)A) at position 37 in tRNAs that read codons beginning with uridine. In Anoxybacillus flavithermus (strain DSM 21510 / WK1), this protein is tRNA-2-methylthio-N(6)-dimethylallyladenosine synthase.